A 122-amino-acid chain; its full sequence is Basic phospholipase A2 10 (122 aa).

Intrachain disulfides connect C26/C114, C28/C43, C42/C94, C48/C122, C49/C87, C56/C80, and C74/C85. 3 residues coordinate Ca(2+): Y27, G29, and G31. H46 is an active-site residue. D47 lines the Ca(2+) pocket. D88 is a catalytic residue.

Ca(2+) is required as a cofactor. As to expression, expressed by the venom gland.

It localises to the secreted. It catalyses the reaction a 1,2-diacyl-sn-glycero-3-phosphocholine + H2O = a 1-acyl-sn-glycero-3-phosphocholine + a fatty acid + H(+). Inhibited by chemical modifications mediated by p-BPB, anhydrous acetic acid and NBSF. Its function is as follows. Snake venom phospholipase A2 (PLA2) that has a strong dose-dependent anticoagulant effect. In vivo, intramuscular and intervenal injection causes muscle necrosis. Induces moderate edema in the mouse foot pad. PLA2 catalyzes the calcium-dependent hydrolysis of the 2-acyl groups in 3-sn-phosphoglycerides. The polypeptide is Basic phospholipase A2 10 (Crotalus durissus cumanensis (South American rattlesnake)).